The following is a 331-amino-acid chain: Ketol-acid reductoisomerase (NADP(+)) (331 aa).

The KARI N-terminal Rossmann domain maps to 2–182 (ARMYYDADAN…GGTRGGILET (181 aa)). Residues 25–28 (YGSQ), serine 51, serine 53, and 83–86 (DDVQ) contribute to the NADP(+) site. Histidine 108 is a catalytic residue. An NADP(+)-binding site is contributed by glycine 134. One can recognise a KARI C-terminal knotted domain in the interval 183 to 328 (TFREETETDL…KDLRAMFSWL (146 aa)). Aspartate 191, glutamate 195, glutamate 227, and glutamate 231 together coordinate Mg(2+). Residue serine 252 participates in substrate binding.

It belongs to the ketol-acid reductoisomerase family. It depends on Mg(2+) as a cofactor.

The catalysed reaction is (2R)-2,3-dihydroxy-3-methylbutanoate + NADP(+) = (2S)-2-acetolactate + NADPH + H(+). The enzyme catalyses (2R,3R)-2,3-dihydroxy-3-methylpentanoate + NADP(+) = (S)-2-ethyl-2-hydroxy-3-oxobutanoate + NADPH + H(+). The protein operates within amino-acid biosynthesis; L-isoleucine biosynthesis; L-isoleucine from 2-oxobutanoate: step 2/4. It participates in amino-acid biosynthesis; L-valine biosynthesis; L-valine from pyruvate: step 2/4. In terms of biological role, involved in the biosynthesis of branched-chain amino acids (BCAA). Catalyzes an alkyl-migration followed by a ketol-acid reduction of (S)-2-acetolactate (S2AL) to yield (R)-2,3-dihydroxy-isovalerate. In the isomerase reaction, S2AL is rearranged via a Mg-dependent methyl migration to produce 3-hydroxy-3-methyl-2-ketobutyrate (HMKB). In the reductase reaction, this 2-ketoacid undergoes a metal-dependent reduction by NADPH to yield (R)-2,3-dihydroxy-isovalerate. The chain is Ketol-acid reductoisomerase (NADP(+)) from Picosynechococcus sp. (strain ATCC 27264 / PCC 7002 / PR-6) (Agmenellum quadruplicatum).